A 167-amino-acid polypeptide reads, in one-letter code: Transcription factor HES-5 (167 aa).

One can recognise a bHLH domain in the interval 16 to 72 (KNRLRKPVVEKMRRDRINSSIEQLKLLLEQEFARHQPNSKLEKADILEMAVSYLKHS). Positions 88 to 119 (YSEGYSWCLQEAVQFLTLHAASDTQMKLLYHF) constitute an Orange domain. Positions 124–138 (APAAPAKEPPAPGAA) are enriched in pro residues. Positions 124-167 (APAAPAKEPPAPGAAPQPARSSAKAAAAAVSTSRQPACGLWRPW) are disordered. Positions 139 to 160 (PQPARSSAKAAAAAVSTSRQPA) are enriched in low complexity. Positions 164–167 (WRPW) match the WRPW motif motif.

Transcription repression requires formation of a complex with a corepressor protein of the Groucho/TLE family.

The protein resides in the nucleus. Transcriptional repressor of genes that require a bHLH protein for their transcription. Plays an important role as neurogenesis negative regulator. The polypeptide is Transcription factor HES-5 (Hes5) (Mus musculus (Mouse)).